The following is a 1062-amino-acid chain: Roc-COR-CHAT protease (1062 aa).

LRR repeat units follow at residues 70-94, 95-116, 115-141, 142-159, 160-180, 181-203, 204-226, and 228-249; these read LAGL…HLQQ, LRLL…GSMP, MPLL…ALQK, LDVS…SACP, ALWW…MPAG, FKAL…NGKL, PKLV…LLLP, and GLET…IRGS. The 191-residue stretch at 470 to 660 folds into the COR domain; sequence DWLGVMEELQ…GLMWKDNVVF (191 aa). The disordered stretch occupies residues 836–856; sequence ERDNDHTGLSDSSDQEDETFT. Active-site residues include H931 and C980.

A dedicated protease for substrate gasdermin bGSDM; cleaves the bGSDM precursor, releasing the pore-forming moiety, which integrates into the membrane and triggers cell death. Probably involved in defense against bacteriophages. Expression of bGSDM and this neighboring protease is highly toxic in E.coli. The sequence is that of Roc-COR-CHAT protease from Unknown prokaryotic organism.